The primary structure comprises 213 residues: MFQPYTLEEGRYLVKLARSVVEAYLTHGKIVIPENPPPRLINDNYGVFTTIETVQGEKFELRGCIGYPEGYKNTLYATIYSAIGACCQDPRFPAMRREELNSVVFEVSILSPLTLLDDDPRKYLELVQVGRHGLVVKRGPYSGLLLPQVAVEECWSTEEFLIHTCVKAWLPGDCWLDRRTKLYIYEAQIFREREPNEEVYQRDLLGELAKCRK.

The AMMECR1 domain maps to 8 to 201 (EEGRYLVKLA…EREPNEEVYQ (194 aa)).

In Pyrobaculum arsenaticum (strain DSM 13514 / JCM 11321 / PZ6), this protein is Protein Pars_0011.